The following is a 354-amino-acid chain: Ion-translocating oxidoreductase complex subunit D (354 aa).

5 helical membrane-spanning segments follow: residues 19 to 39 (IMLW…YYFG), 40 to 60 (FGVL…EFLV), 70 to 89 (FYIS…VAIP), 94 to 116 (YWII…GGLG), and 123 to 143 (AMVG…TWLA). Thr186 is subject to FMN phosphoryl threonine. 5 consecutive transmembrane segments (helical) span residues 215-235 (LAGL…LFLV), 242-262 (WQIP…SWLF), 266-286 (MPSP…FFIA), 300-320 (LVFG…GGYP), and 321-341 (DGAA…DQYT).

Belongs to the NqrB/RnfD family. As to quaternary structure, the complex is composed of six subunits: RnfA, RnfB, RnfC, RnfD, RnfE and RnfG. It depends on FMN as a cofactor.

It localises to the cell inner membrane. In terms of biological role, part of a membrane-bound complex that couples electron transfer with translocation of ions across the membrane. The protein is Ion-translocating oxidoreductase complex subunit D of Mannheimia succiniciproducens (strain KCTC 0769BP / MBEL55E).